Here is a 107-residue protein sequence, read N- to C-terminus: MIYLYLLCAIFAEVVATSLLKSTEGFTRLWPTVGCLVGYGIAFALLALSISHGMQTDVAYALWSAIGTAAIVLVAVLFLGSPISVMKVVGVGLIVVGVVTLNLAGAH.

4 consecutive transmembrane segments (helical) span residues 2–19, 29–51, 58–80, and 84–106; these read IYLYLLCAIFAEVVATSL, LWPTVGCLVGYGIAFALLALSIS, VAYALWSAIGTAAIVLVAVLFLG, and SVMKVVGVGLIVVGVVTLNLAGA.

It belongs to the drug/metabolite transporter (DMT) superfamily. Small multidrug resistance (SMR) (TC 2.A.7.1) family. Mmr subfamily.

It is found in the cell membrane. Multidrug efflux pump. Confers resistance to tetraphenylphosphonium (TPP), erythromycin, ethidium bromide, acriflavine, safranin O and pyronin Y. The polypeptide is Multidrug resistance protein mmr (mmr) (Mycobacterium bovis (strain ATCC BAA-935 / AF2122/97)).